An 80-amino-acid chain; its full sequence is MSFEVLEQLEAKIQTAVDTIALLQMEVEELKEEKQALATEAGELKASRHELEQKTQQMQEEHSAWQDRIRNLLGKMDDVE.

Residues 3–80 (FEVLEQLEAK…NLLGKMDDVE (78 aa)) are a coiled coil.

This sequence belongs to the ZapB family. As to quaternary structure, homodimer. The ends of the coiled-coil dimer bind to each other, forming polymers. Interacts with FtsZ.

The protein resides in the cytoplasm. Its function is as follows. Non-essential, abundant cell division factor that is required for proper Z-ring formation. It is recruited early to the divisome by direct interaction with FtsZ, stimulating Z-ring assembly and thereby promoting cell division earlier in the cell cycle. Its recruitment to the Z-ring requires functional FtsA or ZipA. This is Cell division protein ZapB from Vibrio atlanticus (strain LGP32) (Vibrio splendidus (strain Mel32)).